The primary structure comprises 252 residues: Small ribosomal subunit protein uS2 (252 aa).

This sequence belongs to the universal ribosomal protein uS2 family.

This is Small ribosomal subunit protein uS2 from Ruminiclostridium cellulolyticum (strain ATCC 35319 / DSM 5812 / JCM 6584 / H10) (Clostridium cellulolyticum).